Reading from the N-terminus, the 401-residue chain is MEKKKVVLAYSGGLDTSVAIKWLQEKNYDIIALCLDLGEGKDLAFVKEKALSVGAIKSYMIDVQEEFANEYALMAMQAHTLYEGKYPLVSALSRPLIAKKLVEIAEQEGATAVAHGCTGKGNDQVRFEVSIQALNPYLEVIAPVREWKWSREEEIAYAKENNVPIPINLDSPFSIDQNLWGRSNECGILEDPWAAPPEDAYEMTLALEDTPNKPEFVEIGFEAGVPTTLNGTAYPLSELIKTLNALAGKHGVGRIDHVENRLVGIKSREVYECPAAMTLITAHKELEDLTLVKEVAHFKPMIEQKITELIYNGLWFSPLKQALHAFLQETQKNVTGMVRVKLFKGHAIVEGRKSEYSLYDEKLATYTAQDEFNHDAAVGFISLFGLPTKVYSQVNQKKVEA.

9–17 (AYSGGLDTS) provides a ligand contact to ATP. L-citrulline is bound at residue Y86. Position 116 (G116) interacts with ATP. T118, N122, and D123 together coordinate L-aspartate. N122 contributes to the L-citrulline binding site. Residues R126, S174, S183, E259, and Y271 each contribute to the L-citrulline site.

It belongs to the argininosuccinate synthase family. Type 1 subfamily. In terms of assembly, homotetramer.

The protein resides in the cytoplasm. The catalysed reaction is L-citrulline + L-aspartate + ATP = 2-(N(omega)-L-arginino)succinate + AMP + diphosphate + H(+). Its pathway is amino-acid biosynthesis; L-arginine biosynthesis; L-arginine from L-ornithine and carbamoyl phosphate: step 2/3. The protein is Argininosuccinate synthase of Bacillus cereus (strain AH820).